The primary structure comprises 324 residues: MLNLDFIYENRNMSESEAELCMINIIDAPDTVKAAFLTALYVKGITPDELSGFSRALRKLSSISINIDKLTDIVGTGGDHKNTINVSTAASILLSLRIKIAKHGNFGITGSHGSADFMKFIGYKFEMTEYDIIKNLNEKNYVYILAPVYNKTFAKFSNVRKKLGIKTVFNILGPLTNPLNPENLVIGAYDDETAETYASVMLKQNKRAFIVSSTMDEISPEAESHVYYVNNAIRKFDLDPLSITGKRINESNIIEKDPVKSFNIIIDAFKNKNRDAASFIALNAAPALVLNGISRDITSAYDLCINDIESGAAYERLRRISNED.

Residues glycine 75, 78-79, threonine 83, 85-88, 102-110, and serine 114 each bind 5-phospho-alpha-D-ribose 1-diphosphate; these read GD, NVST, and KHGNFGITG. Glycine 75 contributes to the anthranilate binding site. Serine 87 contributes to the Mg(2+) binding site. Position 105 (asparagine 105) interacts with anthranilate. Arginine 160 lines the anthranilate pocket. Mg(2+) is bound by residues aspartate 216 and glutamate 217.

This sequence belongs to the anthranilate phosphoribosyltransferase family. As to quaternary structure, homodimer. Requires Mg(2+) as cofactor.

The enzyme catalyses N-(5-phospho-beta-D-ribosyl)anthranilate + diphosphate = 5-phospho-alpha-D-ribose 1-diphosphate + anthranilate. The protein operates within amino-acid biosynthesis; L-tryptophan biosynthesis; L-tryptophan from chorismate: step 2/5. Catalyzes the transfer of the phosphoribosyl group of 5-phosphorylribose-1-pyrophosphate (PRPP) to anthranilate to yield N-(5'-phosphoribosyl)-anthranilate (PRA). In Picrophilus torridus (strain ATCC 700027 / DSM 9790 / JCM 10055 / NBRC 100828 / KAW 2/3), this protein is Anthranilate phosphoribosyltransferase.